The primary structure comprises 221 residues: Ribosomal RNA small subunit methyltransferase Nep1 (221 aa).

Residues glycine 174, glycine 179, and 196–201 contribute to the S-adenosyl-L-methionine site; that span reads IGNVSL.

It belongs to the class IV-like SAM-binding methyltransferase superfamily. RNA methyltransferase NEP1 family. In terms of assembly, homodimer.

It catalyses the reaction a pseudouridine in rRNA + S-adenosyl-L-methionine = an N(1)-methylpseudouridine in rRNA + S-adenosyl-L-homocysteine + H(+). Its function is as follows. Methyltransferase involved in ribosomal biogenesis. Specifically catalyzes the N1-methylation of the pseudouridine corresponding to position 914 in M.jannaschii 16S rRNA. The protein is Ribosomal RNA small subunit methyltransferase Nep1 of Pyrobaculum calidifontis (strain DSM 21063 / JCM 11548 / VA1).